The following is a 707-amino-acid chain: Caprin-1 (707 aa).

Low complexity-rich tracts occupy residues 1–15 (MPSATSHSGSGSKSS) and 22–43 (GSSGSEAAAGAAAPASQHPATG). Residues 1–48 (MPSATSHSGSGSKSSGPPPPSGSSGSEAAAGAAAPASQHPATGTGAVQ) are disordered. The residue at position 2 (P2) is an N-acetylproline. S10 bears the Phosphoserine mark. A coiled-coil region spans residues 58 to 92 (VIDKKLRNLEKKKGKLDDYQERMNKGERLNQDQLD). Residue S113 is modified to Phosphoserine. Residues 123–151 (KTIKKTARREQLMREEAEQKRLKTVLELQ) adopt a coiled-coil conformation. R163 carries the omega-N-methylarginine modification. The span at 325–335 (LQQQPQAASPS) shows a compositional bias: low complexity. The tract at residues 325 to 347 (LQQQPQAASPSVPEPHSLTPVAQ) is disordered. Residues S333 and S341 each carry the phosphoserine modification. Positions 358–379 (QDLMAQMQGPYNFIQDSMLDFE) are G3BP1-binding. Disordered stretches follow at residues 412–496 (ESRL…AGTS), 526–558 (PANEPETLKQQSQYQATYNQSFSSQPHQVEQTE), and 570–707 (TYHG…QQVN). Polar residues predominate over residues 431 to 452 (PLVSSTSEGYTASQPLYQPSHA). Positions 453-462 (TEQRPQKEPM) are enriched in basic and acidic residues. Residues 465-474 (IQATISLNTD) show a composition bias toward polar residues. The segment covering 475 to 489 (QTTASSSLPAASQPQ) has biased composition (low complexity). Composition is skewed to polar residues over residues 533 to 552 (LKQQSQYQATYNQSFSSQPH) and 572 to 603 (HGSQDQPHQVPGNHQQPPQQNTGFPRSSQPYY). Phosphotyrosine is present on Y623. Omega-N-methylarginine occurs at positions 624 and 631. 2 positions are modified to phosphotyrosine: Y634 and Y637. R638 bears the Omega-N-methylarginine mark. Residues 640–655 (SFSNTPNSGYSQSQFT) are compositionally biased toward polar residues. S642 and S647 each carry an O-linked (GlcNAc) serine glycan. A phosphotyrosine mark is found at Y649, Y660, Y663, and Y668. Composition is skewed to low complexity over residues 674-684 (RGSGQSGPRGA) and 695-707 (NRGMPQMNTQQVN). R696 bears the Asymmetric dimethylarginine; alternate mark. Residue R696 is modified to Omega-N-methylarginine; alternate.

It belongs to the caprin family. As to quaternary structure, may form homomultimers. Interacts with G3BP1; interaction is direct and promotes stress granule formation. Interacts with G3BP2; interaction is direct and promotes stress granule formation. Interacts with PQBP1. Interacts with DDX3X. Interacts (when phosphorylated by EPHA4) with FMR1; interaction with FMR1 promotes formation of a membraneless compartment. In terms of processing, tyrosine phosphorylation by EPHA4 promotes interaction with FMR1 and liquid-liquid phase separation (LLPS) for the formation of a membraneless compartment that concentrates mRNAs with associated regulatory factors. Post-translationally, O-glycosylated (O-GlcNAcylated), in a cell cycle-dependent manner. O-glycosylation by OGT inhibit ability to undergo liquid-liquid phase separation (LLPS). As to expression, highest expression in thymus, spleen and brain (at protein level). Lower levels in kidney, muscle and liver (at protein level).

The protein resides in the cytoplasm. The protein localises to the cytoplasmic ribonucleoprotein granule. Its subcellular location is the cytosol. It localises to the cell projection. It is found in the dendrite. The protein resides in the lamellipodium. Ability to mediate liquid-liquid phase separation is regulated by ATP: moderate concentrations of ATP enhance phase separation, whereas high concentrations of ATP lead to inhibition of phase separation. In terms of biological role, mRNA-binding protein that acts as a regulator of mRNAs transport, translation and/or stability, and which is involved in neurogenesis, synaptic plasticity in neurons and cell proliferation and migration in multiple cell types. Plays an essential role in cytoplasmic stress granule formation. Acts as an mRNA regulator by mediating formation of some phase-separated membraneless compartment: undergoes liquid-liquid phase separation upon binding to target mRNAs, leading to assemble mRNAs into cytoplasmic ribonucleoprotein granules that concentrate mRNAs with associated regulatory factors. Undergoes liquid-liquid phase separation following phosphorylation and interaction with FMR1, promoting formation of cytoplasmic ribonucleoprotein granules that concentrate mRNAs with factors that inhibit translation and mediate deadenylation of target mRNAs. In these cytoplasmic ribonucleoprotein granules, CAPRIN1 mediates recruitment of CNOT7 deadenylase, leading to mRNA deadenylation and degradation. Binds directly and selectively to MYC and CCND2 mRNAs. In neuronal cells, directly binds to several mRNAs associated with RNA granules, including BDNF, CAMK2A, CREB1, MAP2, NTRK2 mRNAs, as well as to GRIN1 and KPNB1 mRNAs, but not to rRNAs. The protein is Caprin-1 (Caprin1) of Mus musculus (Mouse).